The sequence spans 376 residues: MLIRGEDVTIPTSMVGNYPNPRWWDAQFARTWTGDQEPPDALIQESLEDAVAAIARDQERAGLDIISDGRVHGDNYAEQALYYYYRRLGYDLKGGYLGFPIYSRLHAGTLTGEVRRHGAIMVEQAKALKKATGKPTKVQYTGVQALTQATNDLHYKSSRDRAMAIAKAINEDIREVDALGVDFIQIDEFTWPYFFEDWAIEAFNAAVDGVKNAKIIAHVCWGNWGGTPAYYPDETAASGEIFDLTKRKAEATKATATGSIVPKAYEARLDVLNLESCGRRSDDLSGLHVMKNHPLPDNVSFWAGVIDVKSTITETADEVANRIRRLLEIVPADRLGVTTDCGLILLQRYIAQDKLHALVEGTKIVRAELAKAKQAA.

H218, C220, and C341 together coordinate Zn(2+).

Belongs to the vitamin-B12 independent methionine synthase family. In terms of assembly, homohexamer. Component I of the aliphatic epoxide carboxylation complex together with components II, III and IV. Requires Zn(2+) as cofactor.

The catalysed reaction is (R)-2-hydroxypropyl-coenzyme M = (R)-1,2-epoxypropane + coenzyme M. The enzyme catalyses (S)-2-hydroxypropyl-coenzyme M = (S)-1,2-epoxypropane + coenzyme M. The protein operates within alkene metabolism; propylene degradation. Inhibited by methylepoxypropane. Inhibited by the zinc chelator 4-(2-pyridylazo)resorcinol (PAR), in the presence of p- (hydroxymercuri)benzenesulfonic acid (PMPS), and by EDTA. Not inhibited by the coenzyme M analog 2-bromoethanesulfonate (BES). In terms of biological role, involved in aliphatic epoxide carboxylation. Catalyzes the addition of coenzyme M (CoM) to either R- or S-epoxypropane to form the thioether conjugate 2-hydroxypropyl-CoM. Catalyzes the reaction of CoM with R-epoxypropane at a rate approximately twice of that with S-epoxypropane. The CoM analogs 2-mercaptopropionate, 2-mercaptoethanol and cysteine substitute poorly for CoM as the thiol substrate. This chain is 2-hydroxypropyl-CoM lyase, found in Xanthobacter autotrophicus (strain ATCC BAA-1158 / Py2).